We begin with the raw amino-acid sequence, 440 residues long: Proline--tRNA ligase (440 aa).

It belongs to the class-II aminoacyl-tRNA synthetase family. ProS type 2 subfamily. Homodimer.

Its subcellular location is the cytoplasm. The catalysed reaction is tRNA(Pro) + L-proline + ATP = L-prolyl-tRNA(Pro) + AMP + diphosphate. Its function is as follows. Catalyzes the attachment of proline to tRNA(Pro) in a two-step reaction: proline is first activated by ATP to form Pro-AMP and then transferred to the acceptor end of tRNA(Pro). This is Proline--tRNA ligase from Azorhizobium caulinodans (strain ATCC 43989 / DSM 5975 / JCM 20966 / LMG 6465 / NBRC 14845 / NCIMB 13405 / ORS 571).